The chain runs to 152 residues: Globin CTT-E/E' (152 aa).

The first 15 residues, 1 to 15, serve as a signal peptide directing secretion; sequence MKFIILALCVAAASA. In terms of domain architecture, Globin spans 16 to 152; that stretch reads LSGDQIGLVQ…AFFGAVFAKM (137 aa). Heme b contacts are provided by H73 and H102.

It belongs to the globin family.

The polypeptide is Globin CTT-E/E' (CTT-E) (Chironomus thummi thummi (Midge)).